The following is a 203-amino-acid chain: Nascent polypeptide-associated complex subunit alpha-like protein 1 (203 aa).

Basic and acidic residues predominate over residues M1–P23. Residues M1–L71 form a disordered region. The span at E24–D50 shows a compositional bias: acidic residues. A Phosphoserine modification is found at S36. The 66-residue stretch at S60 to I125 folds into the NAC-A/B domain. Residues E158–T203 enclose the UBA domain.

The protein belongs to the NAC-alpha family.

Its function is as follows. May promote appropriate targeting of ribosome-nascent polypeptide complexes. This chain is Nascent polypeptide-associated complex subunit alpha-like protein 1, found in Arabidopsis thaliana (Mouse-ear cress).